A 599-amino-acid chain; its full sequence is uncharacterized protein (599 aa).

This is an uncharacterized protein from Acanthamoeba polyphaga (Amoeba).